The sequence spans 364 residues: Cell cycle control protein 50A (364 aa).

A disordered region spans residues M1–P28. Position 2 is an N-acetylalanine (A2). Topologically, residues A2–T49 are cytoplasmic. Residues V50–V70 traverse the membrane as a helical segment. The Exoplasmic loop segment spans residues T71–L328. Disulfide bonds link C91-C104, C94-C102, and C157-C171. Residue N98 is glycosylated (N-linked (GlcNAc...) asparagine). N297 carries an N-linked (GlcNAc...) asparagine glycan. The chain crosses the membrane as a helical span at residues G329 to I349. Topologically, residues N350–I364 are cytoplasmic.

It belongs to the CDC50/LEM3 family. As to quaternary structure, component of various P4-ATPase flippase complexes which consists of a catalytic alpha subunit and an accessory beta subunit. Interacts with ATP8A1 to form a flippase complex; this complex forms an intermediate phosphoenzyme. The ATP8A2:TMEM30A flippase complex has been purified, and ATP8B1:TMEM30A and ATP8B2:TMEM30A flippase complexes have been shown to form intermediate phosphoenzymes in vitro. Interacts with alpha subunits ATP8A1, ATP8B1, ATP8B2, ATP8B4, ATP10A, ATP10B, ATP10D, ATP11A, ATP11B and ATP11C. Post-translationally, N-glycosylated. Contains high mannose-type oligosaccharides. As to expression, expressed in photoreceptor cells; detected in retina outer segment (at protein level). Detected in hepatocytes liver sinusoidal endothelial cells and kidney brush border of the proximal tubules (at protein level). Expressed in brain (at protein level).

Its subcellular location is the membrane. The protein resides in the cell membrane. It is found in the golgi apparatus. The protein localises to the cytoplasmic vesicle. It localises to the secretory vesicle membrane. Its subcellular location is the apical cell membrane. Its function is as follows. Accessory component of a P4-ATPase flippase complex which catalyzes the hydrolysis of ATP coupled to the transport of aminophospholipids from the outer to the inner leaflet of various membranes and ensures the maintenance of asymmetric distribution of phospholipids. Phospholipid translocation also seems to be implicated in vesicle formation and in uptake of lipid signaling molecules. The beta subunit may assist in binding of the phospholipid substrate. Required for the proper folding, assembly and ER to Golgi exit of the ATP8A2:TMEM30A flippase complex. ATP8A2:TMEM30A may be involved in regulation of neurite outgrowth, and, reconstituted to liposomes, predomiminantly transports phosphatidylserine (PS) and to a lesser extent phosphatidylethanolamine (PE). The ATP8A1:TMEM30A flippase complex seems to play a role in regulation of cell migration probably involving flippase-mediated translocation of phosphatidylethanolamine (PE) at the plasma membrane. Required for the formation of the ATP8A2, ATP8B1 and ATP8B2 P-type ATPAse intermediate phosphoenzymes. Involved in uptake of platelet-activating factor (PAF). Can also mediate the export of alpha subunits ATP8A1, ATP8B1, ATP8B2, ATP8B4, ATP10A, ATP10B, ATP10D, ATP11A, ATP11B and ATP11C from the ER to other membrane localizations. In Mus musculus (Mouse), this protein is Cell cycle control protein 50A.